Reading from the N-terminus, the 370-residue chain is MAEERQDALREFVAVTGAEEDRARFFLESAGWDLQIALASFYEDGGDEDIVTISQATPSSVSRGTAPSDNRVTSFRDLIHDQDEEEEEEEGQRFYAGGSERSGQQIVGPPRKKSPNELVDDLFKGAKEHGAVAVERVTKSPGETSKPRPFAGGGYRLGAAPEEESAYVAGERRRHSGQDVHVVLKLWKTGFSLDNGDLRSYQDPSNAQFLESIRRGEVPAELRRLAHGGQVNLDMEDHRDEDFVKPKGAFKAFTGEGQKLGSTAPQVLNTSSPAQQAENEAKASSSILINEAEPTTNIQIRLADGGRLVQKFNHSHRISDIRLFIVDARPAMAATSFVLMTTFPNKELADENQTLKEANLLNAVIVQRLT.

Residues 54-73 (SQATPSSVSRGTAPSDNRVT) are disordered. Ser-74, Ser-102, and Ser-114 each carry phosphoserine. Disordered regions lie at residues 80–116 (HDQD…KSPN) and 138–157 (TKSP…GYRL). The Nuclear localization signal motif lies at 109-115 (PPRKKSP). Ser-140 bears the Phosphoserine; by CDK1 mark. At Tyr-167 the chain carries Phosphotyrosine. The Nuclear localization signal signature appears at 172–175 (RRRH). Phosphoserine is present on residues Ser-176, Ser-192, and Ser-272. An SEP domain is found at 179–244 (DVHVVLKLWK…MEDHRDEDFV (66 aa)). The UBX domain occupies 291 to 368 (EAEPTTNIQI…NLLNAVIVQR (78 aa)).

The protein belongs to the NSFL1C family. Part of a ternary complex containing STX5A, NSFL1C and VCP. NSFL1C forms a homotrimer that binds to one end of a VCP homohexamer. The complex binds to membranes enriched in phosphatidylethanolamine-containing lipids and promotes Golgi membrane fusion. Interaction with VCIP135 leads to dissociation of the complex via ATP hydrolysis by VCP. Binds ubiquitin and mono-ubiquitinated proteins via its N-terminal UBA-like domain when bound to VCP. In terms of processing, phosphorylated during mitosis. Phosphorylation inhibits interaction with Golgi membranes and is required for the fragmentation of the Golgi stacks during mitosis. Highly expressed in heart, brain, spleen, lung, liver, muscle, kidney and testis.

The protein localises to the nucleus. Its subcellular location is the golgi apparatus. It localises to the golgi stack. The protein resides in the chromosome. It is found in the cytoplasm. The protein localises to the cytoskeleton. Its subcellular location is the microtubule organizing center. It localises to the centrosome. Reduces the ATPase activity of VCP. Necessary for the fragmentation of Golgi stacks during mitosis and for VCP-mediated reassembly of Golgi stacks after mitosis. May play a role in VCP-mediated formation of transitional endoplasmic reticulum (tER). Inhibits the activity of CTSL (in vitro). Together with UBXN2B/p37, regulates the centrosomal levels of kinase AURKA/Aurora A during mitotic progression by promoting AURKA removal from centrosomes in prophase. Also, regulates spindle orientation during mitosis. The polypeptide is NSFL1 cofactor p47 (Nsfl1c) (Rattus norvegicus (Rat)).